We begin with the raw amino-acid sequence, 334 residues long: Beta-ketoacyl-[acyl-carrier-protein] synthase III (334 aa).

Active-site residues include C114 and H253. The segment at 254 to 258 (QANIR) is ACP-binding. N283 is a catalytic residue.

It belongs to the thiolase-like superfamily. FabH family. As to quaternary structure, homodimer.

The protein localises to the cytoplasm. The enzyme catalyses malonyl-[ACP] + acetyl-CoA + H(+) = 3-oxobutanoyl-[ACP] + CO2 + CoA. The protein operates within lipid metabolism; fatty acid biosynthesis. Its function is as follows. Catalyzes the condensation reaction of fatty acid synthesis by the addition to an acyl acceptor of two carbons from malonyl-ACP. Catalyzes the first condensation reaction which initiates fatty acid synthesis and may therefore play a role in governing the total rate of fatty acid production. Possesses both acetoacetyl-ACP synthase and acetyl transacylase activities. Its substrate specificity determines the biosynthesis of branched-chain and/or straight-chain of fatty acids. This is Beta-ketoacyl-[acyl-carrier-protein] synthase III from Campylobacter concisus (strain 13826).